A 279-amino-acid polypeptide reads, in one-letter code: tRNA (carboxymethyluridine(34)-5-O)-methyltransferase (279 aa).

The interval 172–236 (KSKSKPKTKS…QQQDQEQERE (65 aa)) is disordered. Residues 200 to 229 (PKERSEYLQRWKEEQQRSKSLDDNDEKQQQ) show a composition bias toward basic and acidic residues.

Interacts with TRM112.

It is found in the cytoplasm. It localises to the nucleus. The catalysed reaction is 5-(carboxymethyl)uridine(34) in tRNA + S-adenosyl-L-methionine = 5-(2-methoxy-2-oxoethyl)uridine(34) in tRNA + S-adenosyl-L-homocysteine. Required for the methylation of the wobble bases at position 34 in tRNA. Appears to have a role in stress-response. The protein is tRNA (carboxymethyluridine(34)-5-O)-methyltransferase (TRM9) of Saccharomyces cerevisiae (strain ATCC 204508 / S288c) (Baker's yeast).